The primary structure comprises 178 residues: Nascent polypeptide-associated complex subunit alpha (178 aa).

Residues 16–80 form the NAC-A/B domain; the sequence is PKNEKKAREL…AKVDDMNQRI (65 aa). Over residues 82–100 the composition is skewed to low complexity; that stretch reads EAQAQQAQQEALQKAAADA. The interval 82 to 145 is disordered; that stretch reads EAQAQQAQQE…DETGLDPKDI (64 aa). Basic and acidic residues predominate over residues 101–126; sequence GKTEDKSPEAITADLEKASLGDKKAE. Residues 127 to 139 are compositionally biased toward acidic residues; the sequence is DEEEDEGEIDETG. The UBA domain occupies 140–178; that stretch reads LDPKDIEIVVEQTQVSRAKAVKALRNHDGDMVNAIMDLS.

It belongs to the NAC-alpha family. In terms of assembly, part of the nascent polypeptide-associated complex (NAC), consisting of EGD2 and EGD1. NAC associates with ribosomes via EGD1.

The protein resides in the cytoplasm. It is found in the nucleus. In terms of biological role, component of the nascent polypeptide-associated complex (NAC), a dynamic component of the ribosomal exit tunnel, protecting the emerging polypeptides from interaction with other cytoplasmic proteins to ensure appropriate nascent protein targeting. The NAC complex also promotes mitochondrial protein import by enhancing productive ribosome interactions with the outer mitochondrial membrane and blocks the inappropriate interaction of ribosomes translating non-secretory nascent polypeptides with translocation sites in the membrane of the endoplasmic reticulum. EGD2 may also be involved in transcription regulation. The chain is Nascent polypeptide-associated complex subunit alpha (EGD2) from Candida albicans (strain SC5314 / ATCC MYA-2876) (Yeast).